Here is a 621-residue protein sequence, read N- to C-terminus: Interleukin-1 receptor-associated kinase-like 2 (621 aa).

In terms of domain architecture, Death spans 13-94; it reads LDDLCRNMDT…RAAQIILNWK (82 aa). The disordered stretch occupies residues 113 to 175; the sequence is GKPLAASVRN…TASADSKDFS (63 aa). Over residues 157 to 169 the composition is skewed to polar residues; sequence ASSSLKTNQTASA. A Protein kinase domain is found at 206 to 476; the sequence is FNPSHKISEG…AEALVMAACL (271 aa). Residues 212 to 220, Lys-233, and 333 to 336 each bind ATP; these read ISEGTFADV and KSSN. The segment covering 503 to 522 has biased composition (polar residues); it reads ETSLPCSGLSEGTGSSFNTP. Residues 503-534 are disordered; the sequence is ETSLPCSGLSEGTGSSFNTPEETDDVDNSSFD.

This sequence belongs to the protein kinase superfamily. TKL Ser/Thr protein kinase family. Pelle subfamily. In terms of assembly, interacts with MYD88. IL-1 stimulation leads to the formation of a signaling complex which dissociates from the IL-1 receptor following the binding of PELI1.

Binds to the IL-1 type I receptor following IL-1 engagement, triggering intracellular signaling cascades leading to transcriptional up-regulation and mRNA stabilization. This chain is Interleukin-1 receptor-associated kinase-like 2 (IRAK2), found in Bos taurus (Bovine).